Reading from the N-terminus, the 185-residue chain is Prenylated Rab acceptor protein 1 (185 aa).

At 1-78 (MAVEKDQQKD…RNVEYYQSNY (78 aa)) the chain is on the cytoplasmic side. The tract at residues 30–54 (AGREWLERRRATIRSWGSFVDQRRF) is required for interaction with prenylated RAB3A and VAMP2. A run of 2 helical transmembrane segments spans residues 79–94 (VFVF…ATSP) and 95–112 (MLLV…ILYL). Residues 113-131 (RTLQSKFVLFGREVSPAHQ) lie on the Cytoplasmic side of the membrane. 2 consecutive transmembrane segments (helical) span residues 132 to 148 (YALA…LAGA) and 149 to 165 (GSAV…VIGS). A required for interaction with GDI1 region spans residues 165 to 185 (SHAAFHQIEAVDGEELQMEPV). The Cytoplasmic segment spans residues 166 to 185 (HAAFHQIEAVDGEELQMEPV). Residues 175–185 (VDGEELQMEPV) are required for interaction with prenylated RAB3A and VAMP2. The tract at residues 175–185 (VDGEELQMEPV) is homodimerization.

It belongs to the PRA1 family. In terms of assembly, homodimer. Interacts with VAMP2 (synaptobrevin-2), prenylated Rab proteins, GDI1, NDRG1 and PCLO.

The protein resides in the cell membrane. The protein localises to the cytoplasm. Its subcellular location is the golgi apparatus. It localises to the cytoplasmic vesicle. It is found in the secretory vesicle. The protein resides in the synaptic vesicle. In terms of biological role, general Rab protein regulator required for vesicle formation from the Golgi complex. May control vesicle docking and fusion by mediating the action of Rab GTPases to the SNARE complexes. In addition it inhibits the removal of Rab GTPases from the membrane by GDI1. The chain is Prenylated Rab acceptor protein 1 (RABAC1) from Bos taurus (Bovine).